A 723-amino-acid polypeptide reads, in one-letter code: Polyribonucleotide nucleotidyltransferase (723 aa).

Mg(2+) is bound by residues aspartate 488 and aspartate 494. A KH domain is found at 555–614; that stretch reads PRMITMKIHPDKIREVIGKGGSTIQALTKETGTTIDIQEDGTITIASTSTEGMAEAKRRI. The region spanning 624–692 is the S1 motif domain; sequence GKIYAGTVLK…EKGRLRLSLK (69 aa). Positions 701 to 723 are disordered; the sequence is SISPINAGESAAPAAPAGGSEQQ. Low complexity predominate over residues 707–723; sequence AGESAAPAAPAGGSEQQ.

It belongs to the polyribonucleotide nucleotidyltransferase family. The cofactor is Mg(2+).

The protein resides in the cytoplasm. The catalysed reaction is RNA(n+1) + phosphate = RNA(n) + a ribonucleoside 5'-diphosphate. Its function is as follows. Involved in mRNA degradation. Catalyzes the phosphorolysis of single-stranded polyribonucleotides processively in the 3'- to 5'-direction. The protein is Polyribonucleotide nucleotidyltransferase of Cupriavidus taiwanensis (strain DSM 17343 / BCRC 17206 / CCUG 44338 / CIP 107171 / LMG 19424 / R1) (Ralstonia taiwanensis (strain LMG 19424)).